A 93-amino-acid polypeptide reads, in one-letter code: Aspartyl/glutamyl-tRNA(Asn/Gln) amidotransferase subunit C (93 aa).

It belongs to the GatC family. In terms of assembly, heterotrimer of A, B and C subunits.

It catalyses the reaction L-glutamyl-tRNA(Gln) + L-glutamine + ATP + H2O = L-glutaminyl-tRNA(Gln) + L-glutamate + ADP + phosphate + H(+). The catalysed reaction is L-aspartyl-tRNA(Asn) + L-glutamine + ATP + H2O = L-asparaginyl-tRNA(Asn) + L-glutamate + ADP + phosphate + 2 H(+). Its function is as follows. Allows the formation of correctly charged Asn-tRNA(Asn) or Gln-tRNA(Gln) through the transamidation of misacylated Asp-tRNA(Asn) or Glu-tRNA(Gln) in organisms which lack either or both of asparaginyl-tRNA or glutaminyl-tRNA synthetases. The reaction takes place in the presence of glutamine and ATP through an activated phospho-Asp-tRNA(Asn) or phospho-Glu-tRNA(Gln). The sequence is that of Aspartyl/glutamyl-tRNA(Asn/Gln) amidotransferase subunit C from Methanocella arvoryzae (strain DSM 22066 / NBRC 105507 / MRE50).